We begin with the raw amino-acid sequence, 170 residues long: Small ribosomal subunit protein uS9 (170 aa).

Belongs to the universal ribosomal protein uS9 family.

This is Small ribosomal subunit protein uS9 from Rhodococcus opacus (strain B4).